A 585-amino-acid chain; its full sequence is Acetolactate synthase large subunit (585 aa).

Residue Glu60 participates in thiamine diphosphate binding. Residues Arg162, 272–293 (HGTAYANFAVSECDLLIALGAR), and 315–334 (DIDPAEIGKNRIPQLAIISD) each bind FAD. The tract at residues 407–486 (QHQMWAAQFL…IKIFIINNQW (80 aa)) is thiamine pyrophosphate binding. Residues Asp457 and Asn484 each coordinate Mg(2+).

The protein belongs to the TPP enzyme family. Dimer of large and small chains. Mg(2+) is required as a cofactor. Requires thiamine diphosphate as cofactor.

Its subcellular location is the plastid. The protein localises to the chloroplast. The catalysed reaction is 2 pyruvate + H(+) = (2S)-2-acetolactate + CO2. Its pathway is amino-acid biosynthesis; L-isoleucine biosynthesis; L-isoleucine from 2-oxobutanoate: step 1/4. It participates in amino-acid biosynthesis; L-valine biosynthesis; L-valine from pyruvate: step 1/4. In Cyanidium caldarium (Red alga), this protein is Acetolactate synthase large subunit (ilvB).